We begin with the raw amino-acid sequence, 151 residues long: Calcium-binding protein SPEC 2C (151 aa).

EF-hand domains are found at residues 10 to 45 (EQRK…IEIE), 46 to 78 (LTQE…KAEQ), 81 to 116 (GKGA…CTDP), and 118 to 151 (MTKE…QSSY). Ca(2+) is bound by residues D23, D25, D27, K29, E34, D59, D61, S63, E70, D94, D96, S98, S100, E105, D131, D135, E137, and E142.

In terms of tissue distribution, found in cell lineages giving rise to the aboral ectoderm, a squamous epithelium covering the surface of the late stage embryo and larva.

Its function is as follows. Calcium-binding protein involved in larval development and metamorphosis. Likely to function as calcium buffers mediating the transport of calcium from the sea water to the blastocoel where calcium is required for skeleton formation. The chain is Calcium-binding protein SPEC 2C (SPEC2C) from Strongylocentrotus purpuratus (Purple sea urchin).